A 307-amino-acid chain; its full sequence is Transmembrane and coiled-coil domain-containing protein 5B (307 aa).

Positions 17–207 (FASSLEAVKQ…LEKQISKAQD (191 aa)) form a coiled coil. The helical transmembrane segment at 243–265 (YFQYLTFMVLVFIRLLAYVIFHL) threads the bilayer.

It belongs to the TMCO5 family.

It localises to the membrane. The sequence is that of Transmembrane and coiled-coil domain-containing protein 5B (TMCO5B) from Homo sapiens (Human).